Here is a 445-residue protein sequence, read N- to C-terminus: Probable protein phosphatase 2C 14 (445 aa).

In terms of domain architecture, PPM-type phosphatase spans 120–440 (GFGVVSRNGK…DDITVVIIDL (321 aa)). Mn(2+) contacts are provided by Asp-156, Gly-157, and Asp-318. A disordered region spans residues 384–404 (NSENESPSLNREIGSSPSKSP). Positions 390–404 (PSLNREIGSSPSKSP) are enriched in polar residues. Asp-431 contacts Mn(2+).

The protein belongs to the PP2C family. Mg(2+) is required as a cofactor. Requires Mn(2+) as cofactor.

The enzyme catalyses O-phospho-L-seryl-[protein] + H2O = L-seryl-[protein] + phosphate. The catalysed reaction is O-phospho-L-threonyl-[protein] + H2O = L-threonyl-[protein] + phosphate. The protein is Probable protein phosphatase 2C 14 of Arabidopsis thaliana (Mouse-ear cress).